A 507-amino-acid chain; its full sequence is Protein DETOXIFICATION 41 (507 aa).

Over 1–62 (MSSTETYEPL…KLLWTLSGAS (62 aa)) the chain is Cytoplasmic. Residues 63 to 83 (IVVSVLNYMLSFVTVMFTGHL) form a helical membrane-spanning segment. The Vacuolar portion of the chain corresponds to 84–92 (GSLQLAGAS). Residues 93-113 (IATVGIQGLAYGIMLGMASAV) traverse the membrane as a helical segment. Residues 114-137 (QTVCGQAYGARQYSSMGIICQRAM) lie on the Cytoplasmic side of the membrane. A helical transmembrane segment spans residues 138 to 158 (VLHLAAAVFLTFLYWYSGPIL). Residues 159–170 (KTMGQSVAIAHE) lie on the Vacuolar side of the membrane. Residues 171–191 (GQIFARGMIPQIYAFALACPM) form a helical membrane-spanning segment. Residues 192 to 202 (QRFLQAQNIVN) are Cytoplasmic-facing. The helical transmembrane segment at 203-223 (PLAYMSLGVFLLHTLLTWLVT) threads the bilayer. Residue Asn224 is a topological domain, vacuolar. The helical transmembrane segment at 225–245 (VLDFGLLGAALILSFSWWLLV) threads the bilayer. Topologically, residues 246 to 283 (AVNGMYILMSPNCKETWTGFSTRAFRGIWPYFKLTVAS) are cytoplasmic. Residues 284-304 (AVMLCLEIWYNQGLVIISGLL) form a helical membrane-spanning segment. Residues 305–312 (SNPTISLD) lie on the Vacuolar side of the membrane. The chain crosses the membrane as a helical span at residues 313–333 (AISICMYYLNWDMQFMLGLSA). Over 334-355 (AISVRVSNELGAGNPRVAMLSV) the chain is Cytoplasmic. The helical transmembrane segment at 356–376 (VVVNITTVLISSVLCVIVLVF) threads the bilayer. Over 377 to 389 (RVGLSKAFTSDAE) the chain is Vacuolar. The chain crosses the membrane as a helical span at residues 390 to 410 (VIAAVSDLFPLLAVSIFLNGI). Over 411 to 425 (QPILSGVAIGSGWQA) the chain is Cytoplasmic. A helical membrane pass occupies residues 426-446 (VVAYVNLVTYYVIGLPIGCVL). Topologically, residues 447–453 (GFKTSLG) are vacuolar. Residues 454-474 (VAGIWWGMIAGVILQTLTLIV) traverse the membrane as a helical segment. Over 475–507 (LTLKTNWTSEVENAAQRVKTSATENQEMANAGV) the chain is Cytoplasmic.

Belongs to the multi antimicrobial extrusion (MATE) (TC 2.A.66.1) family. Expressed in reproductive tissues, from buds to siliques. Restricted to the endothelium layer of the ovule and the seed coat.

Its subcellular location is the vacuole membrane. The protein operates within secondary metabolite biosynthesis; flavonoid biosynthesis. Acts as a flavonoid/H(+)-antiporter that control the vacuolar sequestration of flavonoids in the seed coat endothelium. Could transport the anthocyanin cyanidin-3-O-glucoside and epicatechin 3'-O-glucoside in vitro. The sequence is that of Protein DETOXIFICATION 41 from Arabidopsis thaliana (Mouse-ear cress).